Reading from the N-terminus, the 180-residue chain is Putative adenylate kinase (180 aa).

5 residues coordinate ATP: G10, G12, K13, T14, and T15. The interval 30-50 is NMP; the sequence is NLRDFALEKGCGREVDGEVEV. The interval 99 to 109 is LID; sequence ERGYSKEKIGE. Positions 100 and 138 each coordinate ATP.

It belongs to the adenylate kinase family. AK6 subfamily. In terms of assembly, interacts with uS11. Not a structural component of 40S pre-ribosomes, but transiently interacts with them by binding to uS11.

It catalyses the reaction AMP + ATP = 2 ADP. It carries out the reaction ATP + H2O = ADP + phosphate + H(+). Its function is as follows. Broad-specificity nucleoside monophosphate (NMP) kinase that catalyzes the reversible transfer of the terminal phosphate group between nucleoside triphosphates and monophosphates. Also has ATPase activity. Involved in the late maturation steps of the 30S ribosomal particles, specifically 16S rRNA maturation. While NMP activity is not required for ribosome maturation, ATPase activity is. Associates transiently with small ribosomal subunit protein uS11. ATP hydrolysis breaks the interaction with uS11. May temporarily remove uS11 from the ribosome to enable a conformational change of the ribosomal RNA that is needed for the final maturation step of the small ribosomal subunit. This is Putative adenylate kinase from Pyrococcus abyssi (strain GE5 / Orsay).